We begin with the raw amino-acid sequence, 2287 residues long: Serine/threonine-protein kinase MEC1 (2287 aa).

The 555-residue stretch at 1310 to 1864 (TLAKKSLETD…LWYISILLNS (555 aa)) folds into the FAT domain. One can recognise a PI3K/PI4K catalytic domain in the interval 1968-2271 (FSSQYMVFNS…QVEALTQESC (304 aa)). Positions 1974–1980 (VFNSLKK) are G-loop. The tract at residues 2140 to 2148 (GLGDRHCEN) is catalytic loop. The tract at residues 2160–2184 (HVDFDCLFEKGKKLPVPEIVPFRLT) is activation loop. Positions 2255 to 2287 (LALSVSGQVEALTQESCSVENLSKMYIGWLPFW) constitute an FATC domain.

Belongs to the PI3/PI4-kinase family. ATM subfamily.

Its subcellular location is the nucleus. The catalysed reaction is L-seryl-[protein] + ATP = O-phospho-L-seryl-[protein] + ADP + H(+). It catalyses the reaction L-threonyl-[protein] + ATP = O-phospho-L-threonyl-[protein] + ADP + H(+). Functionally, serine/threonine protein kinase which activates checkpoint signaling upon genotoxic stresses such as ionizing radiation (IR), ultraviolet light (UV), or DNA replication stalling, thereby acting as a DNA damage sensor. Recognizes the substrate consensus sequence [ST]-Q. Recruited to DNA lesions in order to initiate the DNA repair by homologous recombination. Phosphorylates histone H2A to form H2AS128ph (gamma-H2A) at sites of DNA damage, also involved in the regulation of DNA damage response mechanism. Required for cell growth and meiotic recombination. In Kluyveromyces lactis (strain ATCC 8585 / CBS 2359 / DSM 70799 / NBRC 1267 / NRRL Y-1140 / WM37) (Yeast), this protein is Serine/threonine-protein kinase MEC1 (MEC1).